We begin with the raw amino-acid sequence, 124 residues long: Flowering-promoting factor 1-like protein 1 (124 aa).

The segment at 19–42 (PYNQSAGDSSESSSSGGNQQQRMR) is disordered. Positions 22–39 (QSAGDSSESSSSGGNQQQ) are enriched in low complexity.

Belongs to the FPF1 family. As to expression, expressed in roots, flowers, and at a low level, in leaves.

Its function is as follows. Modulates the competence to flowering of apical meristems. The protein is Flowering-promoting factor 1-like protein 1 (FLP1) of Arabidopsis thaliana (Mouse-ear cress).